Reading from the N-terminus, the 183-residue chain is Dual-action ribosomal maturation protein DarP (183 aa).

Residues 1-21 form a disordered region; sequence MKQKPEDWLNDVPDNQEDDED.

It belongs to the DarP family.

The protein localises to the cytoplasm. Its function is as follows. Member of a network of 50S ribosomal subunit biogenesis factors which assembles along the 30S-50S interface, preventing incorrect 23S rRNA structures from forming. Promotes peptidyl transferase center (PTC) maturation. The polypeptide is Dual-action ribosomal maturation protein DarP (Pectobacterium atrosepticum (strain SCRI 1043 / ATCC BAA-672) (Erwinia carotovora subsp. atroseptica)).